Consider the following 199-residue polypeptide: Biogenesis of lysosome-related organelles complex 1 subunit 3 (199 aa).

Residues 1-11 (MASQSRRRRPL) show a composition bias toward basic residues. The segment at 1-81 (MASQSRRRRP…AAPRDLPPLV (81 aa)) is disordered. Residues 23 to 38 (AETDSELSASSEEEEL) show a composition bias toward acidic residues. The segment covering 39–54 (YLGPSGPTRGRPTGLR) has biased composition (low complexity). Threonine 62 is modified (phosphothreonine). Serine 64 carries the phosphoserine modification.

It belongs to the BLOC1S3 family. In terms of assembly, component of the biogenesis of lysosome-related organelles complex 1 (BLOC-1) composed of BLOC1S1, BLOC1S2, BLOC1S3, BLOC1S4, BLOC1S5, BLOC1S6, DTNBP1/BLOC1S7 and SNAPIN/BLOC1S8. Octamer composed of one copy each BLOC1S1, BLOC1S2, BLOC1S3, BLOC1S4, BLOC1S5, BLOC1S6, DTNBP1/BLOC1S7 and SNAPIN/BLOC1S8. The BLOC-1 complex associates with the AP-3 protein complex and membrane protein cargos. Interacts directly with BLOC1S2. Interacts with BLOC1S4, BLOC1S5 and BLOC1S6. Post-translationally, phosphorylated.

It localises to the cytoplasm. Component of the BLOC-1 complex, a complex that is required for normal biogenesis of lysosome-related organelles (LRO), such as platelet dense granules and melanosomes. In concert with the AP-3 complex, the BLOC-1 complex is required to target membrane protein cargos into vesicles assembled at cell bodies for delivery into neurites and nerve terminals. The BLOC-1 complex, in association with SNARE proteins, is also proposed to be involved in neurite extension. Plays a role in intracellular vesicle trafficking. This Sus scrofa (Pig) protein is Biogenesis of lysosome-related organelles complex 1 subunit 3 (BLOC1S3).